Reading from the N-terminus, the 358-residue chain is MAISRLIINHFRNLTAIDLEFERGFNFIIGNNGSGKTSLLEAIFYLGHGRSFKSAVANRIISYQQPHFILHGKIQEQQHQWSVGLQKQRQGNTLMKINGEDAKKISDLAHLLPMQLITPEGLTLLNGGPSYRRAYLDWGLFHHNASFYNAWSSLNRLLKQRNSALQQVCSYEKLKIWDRELTKLAYQVSYWREAYAEALRSEIEKTCQLFLPELEISVSFHQGWDKNMDYADLLQQNFERDRALGYTFSGPQKADFRFKANGLPVEDILSRGQLKLLMCALRLAQGEHLMQQKKRHCIFLLDDFASELDQYKRTLLAERLQKNGSQVFVTAITQEQLQQIQPEKHRTFYLENGRIKDL.

30 to 37 (GNNGSGKT) provides a ligand contact to ATP.

This sequence belongs to the RecF family.

It is found in the cytoplasm. The RecF protein is involved in DNA metabolism; it is required for DNA replication and normal SOS inducibility. RecF binds preferentially to single-stranded, linear DNA. It also seems to bind ATP. In Histophilus somni (strain 129Pt) (Haemophilus somnus), this protein is DNA replication and repair protein RecF.